Here is a 71-residue protein sequence, read N- to C-terminus: Small ribosomal subunit protein bS21 (71 aa).

The interval 38-71 (YEKPTTERKRARASAIKRHAKKLARENARRTRLY) is disordered. Positions 46–59 (KRARASAIKRHAKK) are enriched in basic residues. A compositionally biased stretch (basic and acidic residues) spans 60 to 71 (LARENARRTRLY).

Belongs to the bacterial ribosomal protein bS21 family.

This chain is Small ribosomal subunit protein bS21, found in Hamiltonella defensa subsp. Acyrthosiphon pisum (strain 5AT).